Reading from the N-terminus, the 1578-residue chain is DNA-directed RNA polymerase subunit beta' (1578 aa).

Zn(2+) is bound by residues cysteine 101, cysteine 103, cysteine 115, and cysteine 118. Mg(2+)-binding residues include aspartate 1286, aspartate 1288, and aspartate 1290.

This sequence belongs to the RNA polymerase beta' chain family. RpoC1 subfamily. As to quaternary structure, in plastids the minimal PEP RNA polymerase catalytic core is composed of four subunits: alpha, beta, beta', and beta''. When a (nuclear-encoded) sigma factor is associated with the core the holoenzyme is formed, which can initiate transcription. Mg(2+) is required as a cofactor. The cofactor is Zn(2+).

Its subcellular location is the plastid. It localises to the chloroplast. The catalysed reaction is RNA(n) + a ribonucleoside 5'-triphosphate = RNA(n+1) + diphosphate. Functionally, DNA-dependent RNA polymerase catalyzes the transcription of DNA into RNA using the four ribonucleoside triphosphates as substrates. This is DNA-directed RNA polymerase subunit beta' from Tupiella akineta (Green alga).